Here is a 234-residue protein sequence, read N- to C-terminus: 2-C-methyl-D-erythritol 4-phosphate cytidylyltransferase (234 aa).

The protein belongs to the IspD/TarI cytidylyltransferase family. IspD subfamily.

It carries out the reaction 2-C-methyl-D-erythritol 4-phosphate + CTP + H(+) = 4-CDP-2-C-methyl-D-erythritol + diphosphate. It participates in isoprenoid biosynthesis; isopentenyl diphosphate biosynthesis via DXP pathway; isopentenyl diphosphate from 1-deoxy-D-xylulose 5-phosphate: step 2/6. Functionally, catalyzes the formation of 4-diphosphocytidyl-2-C-methyl-D-erythritol from CTP and 2-C-methyl-D-erythritol 4-phosphate (MEP). The protein is 2-C-methyl-D-erythritol 4-phosphate cytidylyltransferase of Photobacterium profundum (strain SS9).